Here is a 560-residue protein sequence, read N- to C-terminus: Mitochondria-eating protein (560 aa).

Positions 1 to 294 are interaction with YWHAG/14-3-3 protein gamma; it reads MADNLRKLVS…SHSRNHSRSR (294 aa). Phosphoserine occurs at positions 13, 85, 156, and 159. 2 coiled-coil regions span residues 118–186 and 223–248; these read DRNI…SRHR and DYEK…LQGR. Disordered regions lie at residues 178-217 and 243-316; these read QAQE…AQRK and SVLQ…AKLS. A compositionally biased stretch (basic and acidic residues) spans 181-209; sequence EESRHRPPEHRSSEKRGSERRRVEPRGAD. Residues 248–262 show a composition bias toward low complexity; the sequence is RSTRSRSPSPASCSR. The span at 263–293 shows a compositional bias: basic residues; it reads SRSHSHSRSRSHSHSRSGSHSRSHSRNHSRS. Residues 300 to 310 are compositionally biased toward polar residues; it reads TAVSGVRSPSP. Ser307, Ser309, and Ser531 each carry phosphoserine.

Belongs to the MIEAP family. Interacts (via coiled-coil domains) with BNIP3L (via BH3 domain). Interacts (via coiled-coil domains) with BNIP3 (via BH3 domain). Interacts with YWHAG/14-3-3 protein gamma; a protein that also plays a role in MALM.

It is found in the cytoplasm. It localises to the cytosol. The protein localises to the mitochondrion outer membrane. Its subcellular location is the mitochondrion matrix. Key regulator of mitochondrial quality that mediates the repairing or degradation of unhealthy mitochondria in response to mitochondrial damage. Mediator of mitochondrial protein catabolic process (also named MALM) by mediating the degradation of damaged proteins inside mitochondria by promoting the accumulation in the mitochondrial matrix of hydrolases that are characteristic of the lysosomal lumen. Also involved in mitochondrion degradation of damaged mitochondria by promoting the formation of vacuole-like structures (named MIV), which engulf and degrade unhealthy mitochondria by accumulating lysosomes. The physical interaction of SPATA18/MIEAP, BNIP3 and BNIP3L/NIX at the mitochondrial outer membrane regulates the opening of a pore in the mitochondrial double membrane in order to mediate the translocation of lysosomal proteins from the cytoplasm to the mitochondrial matrix. Binds cardiolipin. May form molecular condensates (non-membrane-bounded organelles) within mitochondria that compartmentalize and promote cardiolipin metabolism. This Sus scrofa (Pig) protein is Mitochondria-eating protein (SPATA18).